The chain runs to 291 residues: 5'-3' exonuclease (291 aa).

Positions 176-269 (TPKQVIEYKG…VHAALKPIDK (94 aa)) constitute a 5'-3' exonuclease domain.

5'-3' exonuclease acting preferentially on double-stranded DNA. In Mycoplasma pneumoniae (strain ATCC 29342 / M129 / Subtype 1) (Mycoplasmoides pneumoniae), this protein is 5'-3' exonuclease (polA).